The sequence spans 602 residues: DNA damage-binding protein CMR1 (602 aa).

Residues 35-85 (KEVDNKSFSSPSSQKRRKTTKKPVIKKEISEPSRRSRRIAGIKSELEDPKQ) are disordered. The span at 48–58 (QKRRKTTKKPV) shows a compositional bias: basic residues. Residues 59–68 (IKKEISEPSR) show a composition bias toward basic and acidic residues. WD repeat units follow at residues 229–270 (ICHN…NDTK), 291–328 (RNVS…STEL), 390–430 (LHDK…KSVY), 446–484 (NSRL…KLDN), 526–569 (GRWV…LAHL), and 571–602 (EQVG…YLFE).

This sequence belongs to the WD repeat DDB2/WDR76 family.

In terms of biological role, DNA-binding protein that binds to both single- and double-stranded DNA. Binds preferentially to UV-damaged DNA. May be involved in DNA-metabolic processes. In Candida albicans (strain SC5314 / ATCC MYA-2876) (Yeast), this protein is DNA damage-binding protein CMR1.